A 416-amino-acid chain; its full sequence is Glutamyl-tRNA reductase (416 aa).

Residues 49-52 (TCNR), Ser105, 110-112 (EPQ), and Gln116 each bind substrate. The Nucleophile role is filled by Cys50. An NADP(+)-binding site is contributed by 185–190 (GAGETI).

The protein belongs to the glutamyl-tRNA reductase family. Homodimer.

It catalyses the reaction (S)-4-amino-5-oxopentanoate + tRNA(Glu) + NADP(+) = L-glutamyl-tRNA(Glu) + NADPH + H(+). The protein operates within porphyrin-containing compound metabolism; protoporphyrin-IX biosynthesis; 5-aminolevulinate from L-glutamyl-tRNA(Glu): step 1/2. Functionally, catalyzes the NADPH-dependent reduction of glutamyl-tRNA(Glu) to glutamate 1-semialdehyde (GSA). This Shewanella amazonensis (strain ATCC BAA-1098 / SB2B) protein is Glutamyl-tRNA reductase.